The sequence spans 565 residues: Sulfite reductase [NADPH] hemoprotein beta-component (565 aa).

4 residues coordinate [4Fe-4S] cluster: Cys-429, Cys-435, Cys-474, and Cys-478. Cys-478 contacts siroheme.

It belongs to the nitrite and sulfite reductase 4Fe-4S domain family. In terms of assembly, alpha(8)-beta(8). The alpha component is a flavoprotein, the beta component is a hemoprotein. Siroheme is required as a cofactor. Requires [4Fe-4S] cluster as cofactor.

The catalysed reaction is hydrogen sulfide + 3 NADP(+) + 3 H2O = sulfite + 3 NADPH + 4 H(+). The protein operates within sulfur metabolism; hydrogen sulfide biosynthesis; hydrogen sulfide from sulfite (NADPH route): step 1/1. Component of the sulfite reductase complex that catalyzes the 6-electron reduction of sulfite to sulfide. This is one of several activities required for the biosynthesis of L-cysteine from sulfate. This chain is Sulfite reductase [NADPH] hemoprotein beta-component, found in Shewanella loihica (strain ATCC BAA-1088 / PV-4).